Reading from the N-terminus, the 102-residue chain is Large ribosomal subunit protein bL21 (102 aa).

Belongs to the bacterial ribosomal protein bL21 family. As to quaternary structure, part of the 50S ribosomal subunit. Contacts protein L20.

This protein binds to 23S rRNA in the presence of protein L20. The chain is Large ribosomal subunit protein bL21 from Bacillus licheniformis (strain ATCC 14580 / DSM 13 / JCM 2505 / CCUG 7422 / NBRC 12200 / NCIMB 9375 / NCTC 10341 / NRRL NRS-1264 / Gibson 46).